The following is a 445-amino-acid chain: Eukaryotic translation initiation factor 3 subunit E (445 aa).

The 174-residue stretch at 230 to 403 (FFNHVKGRDL…GHVVMGAQPL (174 aa)) folds into the PCI domain.

Belongs to the eIF-3 subunit E family. Component of the eukaryotic translation initiation factor 3 (eIF-3) complex.

It localises to the cytoplasm. Functionally, component of the eukaryotic translation initiation factor 3 (eIF-3) complex, which is involved in protein synthesis of a specialized repertoire of mRNAs and, together with other initiation factors, stimulates binding of mRNA and methionyl-tRNAi to the 40S ribosome. The eIF-3 complex specifically targets and initiates translation of a subset of mRNAs involved in cell proliferation. The protein is Eukaryotic translation initiation factor 3 subunit E (eIF3-S6) of Bombyx mori (Silk moth).